A 65-amino-acid polypeptide reads, in one-letter code: Large ribosomal subunit protein bL31 (65 aa).

Positions 16, 18, 36, and 39 each coordinate Zn(2+).

This sequence belongs to the bacterial ribosomal protein bL31 family. Type A subfamily. In terms of assembly, part of the 50S ribosomal subunit. Zn(2+) serves as cofactor.

Functionally, binds the 23S rRNA. This is Large ribosomal subunit protein bL31 from Alkaliphilus metalliredigens (strain QYMF).